The chain runs to 87 residues: Phytosulfokines 1 (87 aa).

The signal sequence occupies residues 1–24; it reads MMKTKSEVLIFFFTLVLLLSMASS. Residues 25-76 constitute a propeptide that is removed on maturation; that stretch reads VILREDGFAPPKPSPTTHEKASTKGDRDGVECKNSDSEEECLVKKTVAAHTD. Positions 31–59 are disordered; sequence GFAPPKPSPTTHEKASTKGDRDGVECKNS. A compositionally biased stretch (basic and acidic residues) spans 41 to 59; that stretch reads THEKASTKGDRDGVECKNS. A sulfotyrosine mark is found at tyrosine 77 and tyrosine 79. Residues 82–87 constitute a propeptide that is removed on maturation; that stretch reads DLNLSP.

This sequence belongs to the phytosulfokine family. Sulfation is important for activity and for the binding to a putative membrane receptor. Post-translationally, PSK-beta is produced from PSK-alpha by exopeptidase digestion. Expressed only in roots.

Its subcellular location is the secreted. Functionally, promotes plant cell differentiation, organogenesis and somatic embryogenesis as well as cell proliferation. The sequence is that of Phytosulfokines 1 (PSK1) from Arabidopsis thaliana (Mouse-ear cress).